Reading from the N-terminus, the 41-residue chain is Ornatin-A3 (41 aa).

The short motif at 33-35 is the Cell attachment site element; the sequence is RGD.

Belongs to the ornatin family.

It localises to the secreted. Functionally, potent inhibitor of fibrinogen interaction with platelet receptors expressed on glycoprotein IIb-IIIa complex. May prevent blood from clotting during either feeding and/or storage of ingested blood. In Placobdella ornata (Turtle leech), this protein is Ornatin-A3.